A 95-amino-acid chain; its full sequence is MSVDAATVRRIAQLARIAVTDAEVPHLQGELNAMLNFVEQLSEVNVEGVEPMTSVTPMAMKKRQDVVNDGEIADDIVKNAPATENHFFLVPKVVE.

The protein belongs to the GatC family. Heterotrimer of A, B and C subunits.

The enzyme catalyses L-glutamyl-tRNA(Gln) + L-glutamine + ATP + H2O = L-glutaminyl-tRNA(Gln) + L-glutamate + ADP + phosphate + H(+). It carries out the reaction L-aspartyl-tRNA(Asn) + L-glutamine + ATP + H2O = L-asparaginyl-tRNA(Asn) + L-glutamate + ADP + phosphate + 2 H(+). In terms of biological role, allows the formation of correctly charged Asn-tRNA(Asn) or Gln-tRNA(Gln) through the transamidation of misacylated Asp-tRNA(Asn) or Glu-tRNA(Gln) in organisms which lack either or both of asparaginyl-tRNA or glutaminyl-tRNA synthetases. The reaction takes place in the presence of glutamine and ATP through an activated phospho-Asp-tRNA(Asn) or phospho-Glu-tRNA(Gln). The chain is Aspartyl/glutamyl-tRNA(Asn/Gln) amidotransferase subunit C from Bradyrhizobium sp. (strain BTAi1 / ATCC BAA-1182).